Consider the following 300-residue polypeptide: Cation-efflux pump FieF (300 aa).

The helical transmembrane segment at 24 to 44 threads the bilayer; it reads LLIKILAWWYTGSVSILAALV. Positions 45 and 49 each coordinate Zn(2+). 2 consecutive transmembrane segments (helical) span residues 82 to 102 and 114 to 134; these read AALAQSMFISGSALFLFLTSI and PGVGIGVTVIALICTIILVTF. Residues His-153 and Asp-157 each contribute to the Zn(2+) site. A run of 2 helical transmembrane segments spans residues 156–176 and 178–198; these read SDVMMNGAILIALGLSWYGWH and ADALFALGIGIYILYSALRMG.

Belongs to the cation diffusion facilitator (CDF) transporter (TC 2.A.4) family. FieF subfamily. In terms of assembly, homodimer.

The protein resides in the cell inner membrane. The enzyme catalyses Zn(2+)(in) + H(+)(out) = Zn(2+)(out) + H(+)(in). It carries out the reaction Cd(2+)(in) + H(+)(out) = Cd(2+)(out) + H(+)(in). The catalysed reaction is Fe(2+)(in) + H(+)(out) = Fe(2+)(out) + H(+)(in). Functionally, divalent metal cation transporter which exports Zn(2+), Cd(2+) and possibly Fe(2+). May be involved in zinc and iron detoxification by efflux. The polypeptide is Cation-efflux pump FieF (Salmonella agona (strain SL483)).